The following is a 170-amino-acid chain: Tubulin polymerization-promoting protein family member 2 (170 aa).

Over residues 105 to 117 (TTGVTKSTTVGGV) the composition is skewed to low complexity. The tract at residues 105–170 (TTGVTKSTTV…GAGTYDKKNQ (66 aa)) is disordered. Residues 129-149 (THKERFDESGKGKGIEGREET) are compositionally biased toward basic and acidic residues.

It belongs to the TPPP family. Only expressed in male reproductive organs, including testis. Expressed in elongating spermatids at stages IV-VIII of the seminiferous epithelial cycle in testis and in mature sperm in the epididymis.

Its subcellular location is the cytoplasm. It localises to the cytosol. It is found in the cell projection. The protein resides in the cilium. The protein localises to the flagellum. Its function is as follows. Probable regulator of microtubule dynamics required for sperm motility. In contrast to other members of the family, has no microtubule bundling activity. This is Tubulin polymerization-promoting protein family member 2 from Mus musculus (Mouse).